The sequence spans 231 residues: Probable tetraspanin tspE (231 aa).

At 1-21 (MTFVDNFEFNQNTPRLVRGPF) the chain is on the cytoplasmic side. Residues 22 to 42 (IILNSIIFSLSFILLCSTGII) form a helical membrane-spanning segment. The Extracellular segment spans residues 43–58 (IYYLNEYYLVKDLTIP). A helical transmembrane segment spans residues 59–79 (LGSFILSAYMVITTIVGGIAI). Residues 80–83 (WKKK) are Cytoplasmic-facing. A helical transmembrane segment spans residues 84-104 (LGLHLTFMVFLVVLIVCLVGV). Over 105–195 (SAKMIVDSGN…VESILKYLGY (91 aa)) the chain is Extracellular. The helical transmembrane segment at 196–216 (YGIVLSVIELILLILSGFFLL) threads the bilayer. Residues 217–231 (KTNKNVKSKSFILQD) are Cytoplasmic-facing.

The protein belongs to the tetraspanin (TM4SF) family.

It is found in the membrane. This is Probable tetraspanin tspE (tspE) from Dictyostelium discoideum (Social amoeba).